The primary structure comprises 437 residues: Adenylosuccinate synthetase (437 aa).

GTP is bound by residues 13–19 and 41–43; these read GDEGKGK and GHT. Residue Asp-14 is the Proton acceptor of the active site. Mg(2+)-binding residues include Asp-14 and Gly-41. IMP is bound by residues 14–17, 39–42, Thr-130, Arg-144, Gln-225, Thr-240, and Arg-310; these read DEGK and NAGH. Catalysis depends on His-42, which acts as the Proton donor. Position 306–312 (306–312) interacts with substrate; that stretch reads ATTGRLR. GTP-binding positions include Arg-312, 338–340, and 421–423; these read KLD and STG.

The protein belongs to the adenylosuccinate synthetase family. In terms of assembly, homodimer. Requires Mg(2+) as cofactor.

It localises to the cytoplasm. The enzyme catalyses IMP + L-aspartate + GTP = N(6)-(1,2-dicarboxyethyl)-AMP + GDP + phosphate + 2 H(+). Its pathway is purine metabolism; AMP biosynthesis via de novo pathway; AMP from IMP: step 1/2. Plays an important role in the de novo pathway of purine nucleotide biosynthesis. Catalyzes the first committed step in the biosynthesis of AMP from IMP. The chain is Adenylosuccinate synthetase from Psychromonas ingrahamii (strain DSM 17664 / CCUG 51855 / 37).